Reading from the N-terminus, the 311-residue chain is Putative protease MJ0651 (311 aa).

Catalysis depends on S128, which acts as the Nucleophile. K180 acts as the Proton donor/acceptor in catalysis.

It belongs to the peptidase S49 family.

The protein is Putative protease MJ0651 of Methanocaldococcus jannaschii (strain ATCC 43067 / DSM 2661 / JAL-1 / JCM 10045 / NBRC 100440) (Methanococcus jannaschii).